The chain runs to 534 residues: Pentatricopeptide repeat-containing protein At2g20540 (534 aa).

PPR repeat units follow at residues 41 to 71, 72 to 106, 108 to 142, 143 to 173, 174 to 208, 209 to 239, 240 to 274, 275 to 305, 306 to 340, 341 to 371, and 377 to 407; these read SSFM…VSNP, NVFL…SFEL, DRFT…GPRF, HVVT…MYER, DVIS…TIVS, WTAM…GIEP, DEIS…GFLK, QTGV…MEGK, DVIS…KVKP, NGIT…MRQD, and KIEH…MPMK. Residues 412–487 form a type E motif region; it reads IWGSLLSSCR…TPGGSLIEVN (76 aa). Positions 488–518 are type E(+) motif; that stretch reads NIVQEFVSGDNSKPFWTEISIVLQLFTSHQD.

Belongs to the PPR family. PCMP-E subfamily.

The sequence is that of Pentatricopeptide repeat-containing protein At2g20540 (PCMP-E78) from Arabidopsis thaliana (Mouse-ear cress).